The chain runs to 602 residues: Basic-leucine zipper transcription factor B (602 aa).

The segment covering 1–10 (MNQFYQSTTG) has biased composition (polar residues). A disordered region spans residues 1–128 (MNQFYQSTTG…NRVNQNLASR (128 aa)). 2 stretches are compositionally biased toward low complexity: residues 11–54 (GQQN…TSTS) and 66–102 (QQQIQQQQIQQQQQQQQQQQQQIQQQSVDTPSSYNGD). Residues 58-94 (KNKDNQSKQQQIQQQQIQQQQQQQQQQQQQIQQQSVD) adopt a coiled-coil conformation. The region spanning 113–176 (ENKKNRNRVN…GVEIMKPDPA (64 aa)) is the bZIP domain. The tract at residues 115–135 (KKNRNRVNQNLASRNYRQRKK) is basic motif. The tract at residues 138-145 (IKEIEEKL) is leucine-zipper. Disordered regions lie at residues 328-401 (TNLS…QNNN) and 525-602 (QNQT…PSRQ). 3 stretches are compositionally biased toward low complexity: residues 336 to 350 (PNPTSPNSSSVTQST), 358 to 401 (LTLL…QNNN), and 525 to 592 (QNQT…SSPY). Positions 509–552 (TFSQQTQQLQQAQLQLQNQTKQQQQQLQNNNNNNNNNNNNNNSF) form a coiled coil. Residues 593 to 602 (NHHQQQPSRQ) show a composition bias toward polar residues.

This sequence belongs to the bZIP family. In terms of assembly, binds DNA as a dimer. Heterodimerizes with dimA; in vitro. Also able to form homodimer; in vitro.

The protein resides in the nucleus. Transcriptional regulator involved in DIF-1 signaling. DIF-1 (Differentiation Inducing Factor-1) is a signal molecule involved in the differentiation of pstO (prestalk-O) cells. May be a direct activator of ecmA. The protein is Basic-leucine zipper transcription factor B (dimB) of Dictyostelium discoideum (Social amoeba).